Consider the following 445-residue polypeptide: MNSGFPRILSKKLFTLNQSQFFVKNGMVPLKAGISGPKLLKYTVGIAIGSFAGFYFSNSRSAFHEYVLCPMLRLVTPDAEDGHKLGIWFLKNGLAPRLWFDNDDKVLNVNIFGKKLTNPIGCAAGLDKNGDAIDGILSGGFGYIEIGSVTPLPQPGNPRPRFFRLPLDDAVINRYGFNSSGHDTVVNTLQSRITSFINSYMFKDNSVENLSLYKDKLLGVNLGKNKTGDEVQDYLKGVESFQKYADVLVINVSSPNTPGLRSLQKESILTDLLTQVVAKRDSLVTSGNALGAKTHKPPVLVKVAPDLVEEEIKSIAEAAKKSKVDGIIISNTTIQRPTTLITEDSDLVSQAGGLSGKPLKPLALKALKTMAKYTKGSGLVLVGCGGISSGADAIEFAKAGASMVELYTAYAYKGPGLIAKIKDETTELLKKENKTWSEIIGEDIK.

Residues 1-16 (MNSGFPRILSKKLFTL) constitute a mitochondrion transit peptide. The helical transmembrane segment at 39–56 (LLKYTVGIAIGSFAGFYF) threads the bilayer. Residues 124–128 (AGLDK) and Ser-148 each bind FMN. Lys-128 is a substrate binding site. 173–177 (NRYGF) lines the substrate pocket. Residues Asn-221 and Asn-251 each coordinate FMN. 251–256 (NVSSPN) lines the substrate pocket. The active-site Nucleophile is Ser-254. The FMN site is built by Lys-302 and Ser-330. 331-332 (NT) lines the substrate pocket. Residues Gly-356, Gly-386, and 407-408 (YT) each bind FMN.

Belongs to the dihydroorotate dehydrogenase family. Type 2 subfamily. It depends on FMN as a cofactor.

The protein localises to the mitochondrion inner membrane. The enzyme catalyses (S)-dihydroorotate + a quinone = orotate + a quinol. It functions in the pathway pyrimidine metabolism; UMP biosynthesis via de novo pathway; orotate from (S)-dihydroorotate (quinone route): step 1/1. Catalyzes the conversion of dihydroorotate to orotate with quinone as electron acceptor. In Kluyveromyces lactis (strain ATCC 8585 / CBS 2359 / DSM 70799 / NBRC 1267 / NRRL Y-1140 / WM37) (Yeast), this protein is Dihydroorotate dehydrogenase (quinone), mitochondrial (URA9).